A 461-amino-acid chain; its full sequence is Probable tubulin polyglutamylase TTLL9 (461 aa).

A compositionally biased stretch (polar residues) spans 1 to 10; the sequence is MSRQKSQTSK. Residues 1–20 are disordered; it reads MSRQKSQTSKGHGASKGKER. Residues 22–402 enclose the TTL domain; it reads QRTLIRFKTT…EARLTGKEKR (381 aa). Residues K149 and 155 to 156 contribute to the ATP site; that span reads QG. Q155 is a binding site for a protein. Residues 186–197 show a composition bias toward polar residues; sequence QATRANVNPSGS. A disordered region spans residues 186-208; it reads QATRANVNPSGSHDTRSSDDQKD. Residues 198 to 208 show a composition bias toward basic and acidic residues; that stretch reads HDTRSSDDQKD. ATP-binding positions include 218-221 and 231-233; these read QRYV and KFD. R257 is a binding site for L-glutamate. An ATP-binding site is contributed by 276–277; the sequence is TN. K294 contributes to the L-glutamate binding site. The Mg(2+) site is built by D348, E361, and N363. K379 contributes to the L-glutamate binding site.

Belongs to the tubulin--tyrosine ligase family. Requires Mg(2+) as cofactor.

The protein resides in the cytoplasm. It localises to the cytoskeleton. Its subcellular location is the cilium basal body. It is found in the flagellum axoneme. The catalysed reaction is (L-glutamyl)(n)-gamma-L-glutamyl-L-glutamyl-[protein] + L-glutamate + ATP = (L-glutamyl)(n+1)-gamma-L-glutamyl-L-glutamyl-[protein] + ADP + phosphate + H(+). Probable tubulin polyglutamylase that generates side chains of glutamate on the gamma-carboxyl group of specific glutamate residues within the C-terminal tail of target proteins. Similar to TTLL1, may acquire enzymatic activity only in complex with other proteins as it is most likely lacking domains important for autonomous activity. Mediates tubulin polyglutamylation which induces establishment of microtubule heterogeneity in sperm flagella, thereby playing a role in normal motile flagella axoneme structure and sperm flagella beating pattern. In Rattus norvegicus (Rat), this protein is Probable tubulin polyglutamylase TTLL9 (Ttll9).